The primary structure comprises 345 residues: Erythronate-4-phosphate dehydrogenase (345 aa).

Serine 45 provides a ligand contact to substrate. Positions 146 and 174 each coordinate NAD(+). Arginine 207 is an active-site residue. Position 227 (aspartate 227) interacts with NAD(+). Glutamate 232 is a catalytic residue. Histidine 249 functions as the Proton donor in the catalytic mechanism. An NAD(+)-binding site is contributed by glycine 252.

It belongs to the D-isomer specific 2-hydroxyacid dehydrogenase family. PdxB subfamily. Homodimer.

Its subcellular location is the cytoplasm. It catalyses the reaction 4-phospho-D-erythronate + NAD(+) = (R)-3-hydroxy-2-oxo-4-phosphooxybutanoate + NADH + H(+). It participates in cofactor biosynthesis; pyridoxine 5'-phosphate biosynthesis; pyridoxine 5'-phosphate from D-erythrose 4-phosphate: step 2/5. Functionally, catalyzes the oxidation of erythronate-4-phosphate to 3-hydroxy-2-oxo-4-phosphonooxybutanoate. This is Erythronate-4-phosphate dehydrogenase from Ruthia magnifica subsp. Calyptogena magnifica.